Consider the following 361-residue polypeptide: tRNA/tmRNA (uracil-C(5))-methyltransferase (361 aa).

Residues Gln183, Tyr211, Asn216, Glu232, and Asp294 each contribute to the S-adenosyl-L-methionine site. Catalysis depends on Cys319, which acts as the Nucleophile. Glu353 functions as the Proton acceptor in the catalytic mechanism.

The protein belongs to the class I-like SAM-binding methyltransferase superfamily. RNA M5U methyltransferase family. TrmA subfamily.

The enzyme catalyses uridine(54) in tRNA + S-adenosyl-L-methionine = 5-methyluridine(54) in tRNA + S-adenosyl-L-homocysteine + H(+). The catalysed reaction is uridine(341) in tmRNA + S-adenosyl-L-methionine = 5-methyluridine(341) in tmRNA + S-adenosyl-L-homocysteine + H(+). Dual-specificity methyltransferase that catalyzes the formation of 5-methyluridine at position 54 (m5U54) in all tRNAs, and that of position 341 (m5U341) in tmRNA (transfer-mRNA). This chain is tRNA/tmRNA (uracil-C(5))-methyltransferase, found in Acinetobacter baumannii (strain AB307-0294).